We begin with the raw amino-acid sequence, 156 residues long: Small ribosomal subunit protein uS7 (156 aa).

This sequence belongs to the universal ribosomal protein uS7 family. As to quaternary structure, part of the 30S ribosomal subunit. Contacts proteins S9 and S11.

Functionally, one of the primary rRNA binding proteins, it binds directly to 16S rRNA where it nucleates assembly of the head domain of the 30S subunit. Is located at the subunit interface close to the decoding center, probably blocks exit of the E-site tRNA. This chain is Small ribosomal subunit protein uS7, found in Microcystis aeruginosa (strain NIES-843 / IAM M-2473).